The chain runs to 221 residues: Interleukin-12 subunit alpha (221 aa).

A signal peptide spans 1-25 (MCPLRSLLLISTLVLLHHLPHLSLG). Disulfide bonds link Cys39/Cys112, Cys66/Cys198, and Cys87/Cys125. N-linked (GlcNAc...) asparagine glycosylation occurs at Asn95.

Belongs to the IL-6 superfamily. Heterodimer with IL12B; disulfide-linked. This heterodimer is known as interleukin IL-12. Heterodimer with EBI3/IL27B; not disulfide-linked. This heterodimer is known as interleukin IL-35. Interacts with NBR1; this interaction promotes IL-12 secretion.

The protein resides in the secreted. In terms of biological role, heterodimerizes with IL12B to form the IL-12 cytokine or with EBI3/IL27B to form the IL-35 cytokine. IL-12 is primarily produced by professional antigen-presenting cells (APCs) such as B-cells and dendritic cells (DCs) as well as macrophages and granulocytes and regulates T-cell and natural killer-cell responses, induces the production of interferon-gamma (IFN-gamma), favors the differentiation of T-helper 1 (Th1) cells and is an important link between innate resistance and adaptive immunity. Mechanistically, exerts its biological effects through a receptor composed of IL12R1 and IL12R2 subunits. Binding to the receptor results in the rapid tyrosine phosphorylation of a number of cellular substrates including the JAK family kinases TYK2 and JAK2. In turn, recruited STAT4 gets phosphorylated and translocates to the nucleus where it regulates cytokine/growth factor responsive genes. As part of IL-35, plays essential roles in maintaining the immune homeostasis of the liver microenvironment and also functions as an immune-suppressive cytokine. Mediates biological events through unconventional receptors composed of IL12RB2 and gp130/IL6ST heterodimers or homodimers. Signaling requires the transcription factors STAT1 and STAT4, which form a unique heterodimer that binds to distinct DNA sites. The protein is Interleukin-12 subunit alpha (IL12A) of Bubalus carabanensis (Swamp type water buffalo).